The primary structure comprises 135 residues: Large ribosomal subunit protein bL19 (135 aa).

This sequence belongs to the bacterial ribosomal protein bL19 family.

Its function is as follows. This protein is located at the 30S-50S ribosomal subunit interface and may play a role in the structure and function of the aminoacyl-tRNA binding site. The sequence is that of Large ribosomal subunit protein bL19 from Xanthomonas axonopodis pv. citri (strain 306).